Consider the following 649-residue polypeptide: Threonine--tRNA ligase (649 aa).

In terms of domain architecture, TGS spans Met1–Thr60. The catalytic stretch occupies residues Asp248 to Pro544. Zn(2+)-binding residues include Cys341, His392, and His521.

This sequence belongs to the class-II aminoacyl-tRNA synthetase family. In terms of assembly, homodimer. Requires Zn(2+) as cofactor.

It is found in the cytoplasm. The catalysed reaction is tRNA(Thr) + L-threonine + ATP = L-threonyl-tRNA(Thr) + AMP + diphosphate + H(+). Catalyzes the attachment of threonine to tRNA(Thr) in a two-step reaction: L-threonine is first activated by ATP to form Thr-AMP and then transferred to the acceptor end of tRNA(Thr). Also edits incorrectly charged L-seryl-tRNA(Thr). The polypeptide is Threonine--tRNA ligase (Deinococcus deserti (strain DSM 17065 / CIP 109153 / LMG 22923 / VCD115)).